A 321-amino-acid chain; its full sequence is Probable 1-aminocyclopropane-1-carboxylate oxidase (321 aa).

Residues 159–259 form the Fe2OG dioxygenase domain; sequence PTFGTKVSNY…RMSIASFYNP (101 aa). The Fe cation site is built by His183, Asp185, and His240.

This sequence belongs to the iron/ascorbate-dependent oxidoreductase family. Fe cation is required as a cofactor.

It catalyses the reaction 1-aminocyclopropane-1-carboxylate + L-ascorbate + O2 = ethene + L-dehydroascorbate + hydrogen cyanide + CO2 + 2 H2O. It functions in the pathway alkene biosynthesis; ethylene biosynthesis via S-adenosyl-L-methionine; ethylene from S-adenosyl-L-methionine: step 2/2. This chain is Probable 1-aminocyclopropane-1-carboxylate oxidase (ACO), found in Dianthus caryophyllus (Carnation).